The primary structure comprises 453 residues: Methionine aminopeptidase 2-1 (453 aa).

A compositionally biased stretch (basic and acidic residues) spans 1-12; the sequence is MGSKTPDGHRQS. The disordered stretch occupies residues 1 to 101; that stretch reads MGSKTPDGHR…TTPPRVPLST (101 aa). The span at 46-57 shows a compositional bias: acidic residues; it reads GEDDDDDDENEE. The span at 67–82 shows a compositional bias: basic residues; the sequence is KKKKRKKSKKKNKKSK. Substrate is bound at residue His-210. A divalent metal cation is bound by residues Asp-231, Asp-242, and His-306. His-314 is a substrate binding site. A divalent metal cation is bound by residues Glu-339 and Glu-434.

It belongs to the peptidase M24A family. Methionine aminopeptidase eukaryotic type 2 subfamily. Co(2+) is required as a cofactor. It depends on Zn(2+) as a cofactor. Mn(2+) serves as cofactor. Requires Fe(2+) as cofactor.

Its subcellular location is the cytoplasm. It carries out the reaction Release of N-terminal amino acids, preferentially methionine, from peptides and arylamides.. Cotranslationally removes the N-terminal methionine from nascent proteins. The N-terminal methionine is often cleaved when the second residue in the primary sequence is small and uncharged (Met-Ala-, Cys, Gly, Pro, Ser, Thr, or Val). The polypeptide is Methionine aminopeptidase 2-1 (Aspergillus terreus (strain NIH 2624 / FGSC A1156)).